Here is a 216-residue protein sequence, read N- to C-terminus: TATA-box-binding protein-like 1 (216 aa).

A run of 2 repeats spans residues 38-121 and 126-210.

The protein belongs to the TBP family.

The protein resides in the nucleus. Its function is as follows. TATA box-binding transcription factor. Members of the TBP family are differentially required to regulate transcription and development during early embryogenesis. The chain is TATA-box-binding protein-like 1 (trf1) from Entamoeba histolytica (strain ATCC 30459 / HM-1:IMSS / ABRM).